Reading from the N-terminus, the 310-residue chain is Glutaminase (310 aa).

Residues serine 67, asparagine 118, glutamate 161, asparagine 168, tyrosine 192, tyrosine 244, and valine 262 each contribute to the substrate site.

Belongs to the glutaminase family. Homotetramer.

The catalysed reaction is L-glutamine + H2O = L-glutamate + NH4(+). This Legionella pneumophila (strain Paris) protein is Glutaminase.